Consider the following 169-residue polypeptide: Ribosome maturation factor RimM (169 aa).

A PRC barrel domain is found at 95-168; the sequence is PPDTAYIHDL…EMTIRRFDEF (74 aa).

Belongs to the RimM family. As to quaternary structure, binds ribosomal protein uS19.

The protein localises to the cytoplasm. In terms of biological role, an accessory protein needed during the final step in the assembly of 30S ribosomal subunit, possibly for assembly of the head region. Essential for efficient processing of 16S rRNA. May be needed both before and after RbfA during the maturation of 16S rRNA. It has affinity for free ribosomal 30S subunits but not for 70S ribosomes. The sequence is that of Ribosome maturation factor RimM from Prosthecochloris aestuarii (strain DSM 271 / SK 413).